The chain runs to 554 residues: MNQLAMVNTTITRPLANYHSSVWGNYFLSYTPQLTETSSQEKRELEELKEKVRQMLVETPDNSTQKLVLIDTIQRLGVAYHFENHIKISIQNIFDEFEKNKNKDNDDDLCVVALRFRLVRGQRHYMSSDVFTRFTNDDGKFKETLTKDVSGLLNLYEATHLRVHGEEILEDALSFTVTHLKSMSPKLDNSLKAQVSEALFQPIHTNIPRVVARKYIRIYENIESHDDLLLKFAKLDFHILQKMHQRELSELTRWWKYLDYENKYPYARDKLVECYFWATGVYFGPQYKRARKTLTKLIVIITITDDLYDAYATYDELVPYTDAVERCEISAMHSISPYMRPLYQVFLDYFDEMEKELTKDGKAHYVYYAKIETNKWIKSYLKEAEWLKNDIIPKCEEYKRNATITVSSQMILITCLIVAGEFISKETFEWMINESLIAPASSLINRLKDDIIGHEHEQQREHGASFIECYVKEYRASKQEAYVEARRQIANAWKDINTDYLHATQVPTFVLEPALNLSRLVDILQEDDFTDSQNFLKDTITLLFVDSVNSTSCG.

Mg(2+) is bound by residues D305, D309, D449, and E457. The DDXXD motif signature appears at 305-309 (DDLYD).

It belongs to the terpene synthase family. Tpsa subfamily. Mg(2+) is required as a cofactor. It depends on Mn(2+) as a cofactor. As to expression, mostly expressed in stem trichomes.

The enzyme catalyses (2E,6E)-farnesyl diphosphate = beta-bisabolene + diphosphate. The catalysed reaction is (2E,6E)-farnesyl diphosphate = (Z)-alpha-bisabolene + diphosphate. It carries out the reaction (2E,6E)-farnesyl diphosphate = beta-acoradiene + diphosphate. It catalyses the reaction (2E,6E)-farnesyl diphosphate = (E)-gamma-bisabolene + diphosphate. The enzyme catalyses (2E,6E)-farnesyl diphosphate = (E)-beta-farnesene + diphosphate. The catalysed reaction is (2E,6E)-farnesyl diphosphate = (Z)-beta-farnesene + diphosphate. It carries out the reaction (2E)-geranyl diphosphate = limonene + diphosphate. It catalyses the reaction (2E)-geranyl diphosphate = beta-myrcene + diphosphate. The protein operates within secondary metabolite biosynthesis; terpenoid biosynthesis. In terms of biological role, sesquiterpene synthase involved in the biosynthesis of volatile compounds. Mediates the conversion of (2E,6E)-farnesyl diphosphate ((EE)-FPP) into beta-bisabolene, beta-farnesene, (E)-gamma-bisabolene, beta-acoradiene, selinene and (Z)-alpha-bisabolene. Low or no activity with (2Z,6Z)-farnesyl diphosphate ((ZZ)-FPP). Can act with a low efficiency as a monoterpene synthase with geranyl diphosphate (GPP) as substrate, thus producing beta-myrcene and limonene. This chain is Sesquiterpene synthase 14a, found in Solanum habrochaites (Wild tomato).